The chain runs to 422 residues: 5'-deoxyadenosine deaminase (422 aa).

Zn(2+)-binding residues include His57 and His59. Substrate contacts are provided by Glu86 and His178. His205 lines the Zn(2+) pocket. Residues Glu208 and Asp294 each contribute to the substrate site. Asp294 is a binding site for Zn(2+).

The protein belongs to the metallo-dependent hydrolases superfamily. MTA/SAH deaminase family. Homotetramer. Requires Zn(2+) as cofactor.

The catalysed reaction is 5'-deoxyadenosine + H2O + H(+) = 5'-deoxyinosine + NH4(+). It catalyses the reaction S-adenosyl-L-homocysteine + H2O + H(+) = S-inosyl-L-homocysteine + NH4(+). The enzyme catalyses S-methyl-5'-thioadenosine + H2O + H(+) = S-methyl-5'-thioinosine + NH4(+). It carries out the reaction adenosine + H2O + H(+) = inosine + NH4(+). The protein operates within amino-acid biosynthesis; S-adenosyl-L-methionine biosynthesis. In terms of biological role, catalyzes the deamination of three SAM-derived enzymatic products, namely 5'-deoxyadenosine, S-adenosyl-L-homocysteine, and 5'-methylthioadenosine, to produce the inosine analogs. Can also deaminate adenosine. The preferred substrate for this enzyme is 5'-deoxyadenosine, but all these substrates are efficiently deaminated. Likely functions in a S-adenosyl-L-methionine (SAM) recycling pathway from S-adenosyl-L-homocysteine (SAH) produced from SAM-dependent methylation reactions. May also be involved in the recycling of 5'-deoxyadenosine, whereupon the 5'-deoxyribose moiety of 5'-deoxyinosine is further metabolized to deoxyhexoses used for the biosynthesis of aromatic amino acids in methanogens. This is 5'-deoxyadenosine deaminase from Methanococcus maripaludis (strain C5 / ATCC BAA-1333).